A 239-amino-acid polypeptide reads, in one-letter code: Serine protease SplC (239 aa).

The first 36 residues, 1 to 36, serve as a signal peptide directing secretion; sequence MNKNIVIKSMAALAILTSVTGINAAVVEETQQIANA. Residues His75, Asp113, and Ser193 each act as charge relay system in the active site.

Belongs to the peptidase S1B family.

It localises to the secreted. This Staphylococcus aureus protein is Serine protease SplC (splC).